The primary structure comprises 480 residues: Uridine 5'-monophosphate synthase (480 aa).

Ala2 is subject to N-acetylalanine. The tract at residues 2–214 (AVARAALGPL…VFVAANHNGS (213 aa)) is OPRTase. Tyr37 bears the Phosphotyrosine mark. The residue at position 214 (Ser214) is a Phosphoserine. Positions 215–220 (PLSIKE) are domain linker. The OMPdecase stretch occupies residues 221-480 (APKELSFGAR…WEAYLSRLGV (260 aa)). An orotidine 5'-phosphate-binding site is contributed by Ser257. Residues Ser257, Asp259, and 281 to 283 (KTH) contribute to the UMP site. Lys281 contributes to the orotidine 5'-phosphate binding site. Catalysis depends on for OMPdecase activity residues Asp312, Lys314, and Asp317. Orotidine 5'-phosphate is bound by residues Lys314, Asp317, Thr321, Ser372, 430-432 (QQY), and 450-451 (GR). Residues Asp317, Thr321, Ser372, 430 to 432 (QQY), and 450 to 451 (GR) each bind UMP.

This sequence in the N-terminal section; belongs to the purine/pyrimidine phosphoribosyltransferase family. The protein in the C-terminal section; belongs to the OMP decarboxylase family. Homodimer; dimerization is required for enzymatic activity.

It carries out the reaction orotidine 5'-phosphate + diphosphate = orotate + 5-phospho-alpha-D-ribose 1-diphosphate. The catalysed reaction is orotidine 5'-phosphate + H(+) = UMP + CO2. Its pathway is pyrimidine metabolism; UMP biosynthesis via de novo pathway; UMP from orotate: step 1/2. It functions in the pathway pyrimidine metabolism; UMP biosynthesis via de novo pathway; UMP from orotate: step 2/2. Bifunctional enzyme catalyzing the last two steps of de novo pyrimidine biosynthesis, orotate phosphoribosyltransferase (OPRT), which converts orotate to orotidine-5'-monophosphate (OMP), and orotidine-5'-monophosphate decarboxylase (ODC), the terminal enzymatic reaction that decarboxylates OMP to uridine monophosphate (UMP). This Homo sapiens (Human) protein is Uridine 5'-monophosphate synthase.